Consider the following 357-residue polypeptide: Glutamyl endopeptidase (357 aa).

The N-terminal stretch at 1–29 is a signal peptide; the sequence is MKGKFLKVSSLFVATLTTATLVSSPAANA. Positions 30 to 68 are excised as a propeptide; sequence LSSKAMDNHPQQTQTDKQQTPKIQKGGNLKPLEQRERAN. The segment at 33–58 is disordered; sequence KAMDNHPQQTQTDKQQTPKIQKGGNL. The span at 40 to 54 shows a compositional bias: low complexity; it reads QQTQTDKQQTPKIQK. Catalysis depends on charge relay system residues H119, D161, and S237. The segment at 282 to 357 is disordered; it reads NFANDDHPNN…NNNSDNPDAA (76 aa). 18 tandem repeats follow at residues 289–291, 292–294, 295–297, 298–300, 301–303, 304–306, 307–309, 310–312, 313–315, 316–318, 319–321, 322–324, 325–327, 328–330, 331–333, 337–339, 340–342, and 343–345. Positions 289-345 are 18 X 3 AA repeats of P-[DN]-N; the sequence is PNNPDNPDNPNNPDNPNNPDNPNNPDNPDNPNNPDNPNNPDNPNNPDQPNNPNNPDN. The segment covering 291 to 357 has biased composition (low complexity); that stretch reads NPDNPDNPNN…NNNSDNPDAA (67 aa).

The protein belongs to the peptidase S1B family. Post-translationally, proteolytically cleaved by aureolysin (aur). This cleavage leads to the activation of SspA.

Its subcellular location is the secreted. It catalyses the reaction Preferential cleavage: Glu-|-Xaa, Asp-|-Xaa.. Preferentially cleaves peptide bonds on the carboxyl-terminal side of aspartate and glutamate. Along with other extracellular proteases it is involved in colonization and infection of human tissues. Required for proteolytic maturation of thiol protease SspB and inactivation of SspC, an inhibitor of SspB. It is the most important protease for degradation of fibronectin-binding protein (FnBP) and surface protein A, which are involved in adherence to host cells. May also protect bacteria against host defense mechanism by cleaving the immunoglobulin classes IgG, IgA and IgM. May be involved in the stability of secreted lipases. This chain is Glutamyl endopeptidase (sspA), found in Staphylococcus aureus (strain MRSA252).